A 225-amino-acid chain; its full sequence is PKHD-type hydroxylase Smal_0990 (225 aa).

The 100-residue stretch at 78 to 177 folds into the Fe2OG dioxygenase domain; that stretch reads KYLPPRFNRY…RVASFFWVQS (100 aa). Fe cation-binding residues include His96, Asp98, and His158. Residue Arg168 coordinates 2-oxoglutarate.

Fe(2+) serves as cofactor. Requires L-ascorbate as cofactor.

The protein is PKHD-type hydroxylase Smal_0990 of Stenotrophomonas maltophilia (strain R551-3).